The sequence spans 238 residues: MVEKKSPAEGWPVVNGDYIVGDPESPVAATTLASHIEDVPVEAGAAIAGPCKTENLGIEKMIANLISNPNIRFLILCGSEVQGHITGQSIEALHQNGVDPDKRNIIGATGAIPYIENIPDEGIERFQKQLEIVNLIDVEDADAIKAKVKECIEKDPGAFEEEAMVIKVEEGGEEEEGEEVKPVAPETALIEARMRNIQTQVKMIGSTNRMFAGMYSGKVQGIMIGLAFTLTLGILLLV.

The Cytoplasmic segment spans residues Val-2–Lys-218. Residue His-84 participates in 5-hydroxybenzimidazolylcob(I)amide binding. The helical transmembrane segment at Val-219–Leu-237 threads the bilayer. Residue Val-238 is a topological domain, extracellular.

It belongs to the MtrA family. In terms of assembly, the complex is composed of 8 subunits; MtrA, MtrB, MtrC, MtrD, MtrE, MtrF, MtrG and MtrH. 5-hydroxybenzimidazolylcob(I)amide is required as a cofactor.

Its subcellular location is the cell membrane. It carries out the reaction 5-methyl-5,6,7,8-tetrahydromethanopterin + coenzyme M + 2 Na(+)(in) = 5,6,7,8-tetrahydromethanopterin + methyl-coenzyme M + 2 Na(+)(out). It participates in one-carbon metabolism; methanogenesis from CO(2); methyl-coenzyme M from 5,10-methylene-5,6,7,8-tetrahydromethanopterin: step 2/2. Functionally, part of a complex that catalyzes the formation of methyl-coenzyme M and tetrahydromethanopterin from coenzyme M and methyl-tetrahydromethanopterin. This is an energy-conserving, sodium-ion translocating step. The protein is Tetrahydromethanopterin S-methyltransferase subunit A 1 of Methanothermobacter thermautotrophicus (strain ATCC 29096 / DSM 1053 / JCM 10044 / NBRC 100330 / Delta H) (Methanobacterium thermoautotrophicum).